A 530-amino-acid polypeptide reads, in one-letter code: Chaperone Ric-8A (530 aa).

Ser435 bears the Phosphoserine mark. Phosphothreonine occurs at positions 440 and 442. Ser501, Ser522, Ser523, and Ser527 each carry phosphoserine.

Belongs to the synembryn family. In terms of assembly, interacts with GDP-bound G alpha proteins GNAI1, GNAO1 and GNAQ, and with GNA13 with lower affinity. Does not interact with G-alpha proteins when they are in complex with subunits beta and gamma. Interacts (via C-terminus) with RGS14; the interaction stimulates the dissociation of the complex between RGS14 and the active GTP-bound form of GNAI1. Interacts with NCS1; interaction is favored in the absence of Ca(2+) and myristoylation of NCS1 is not required. Phosphorylated at Ser-435 and Thr-440 by CK2, stabilizing its interface with G alpha proteins.

It is found in the cytoplasm. The protein localises to the cell cortex. Its function is as follows. Chaperone that specifically binds and folds nascent G alpha proteins prior to G protein heterotrimer formation, promoting their stability and activity: folds GNAI1, GNAO1, GNA13 and GNAQ. Does not fold G(s) G-alpha proteins GNAS nor GNAL. Also acts as a guanine nucleotide exchange factor (GEF) for G alpha proteins by stimulating exchange of bound GDP for free GTP. Involved in regulation of microtubule pulling forces during mitotic movement of chromosomes by stimulating G(i)-alpha protein (GNAI1), possibly leading to release G(i)-alpha-GTP and NuMA proteins from the NuMA-GPSM2-G(i)-alpha-GDP complex. Also acts as an activator for G(q)-alpha (GNAQ) protein by enhancing the G(q)-coupled receptor-mediated ERK activation. In Macaca fascicularis (Crab-eating macaque), this protein is Chaperone Ric-8A (RIC8A).